Here is an 865-residue protein sequence, read N- to C-terminus: MVASARVQKLVRRYKLAIATALAILLLQGLVVWSFSGLEEDEPGEKGRQRKPRPLDPGEGSKDTDSSAGRRGSAGRRHGRWRGRAESPGMPVAKVVRAVTSRHRASRRVPPAPPPEAPGRQNLSGAAAGEALVGAAGFPPHGDTGSVEGAPQPTDNGFTPKCEIVGKDALSALARASSKQCQQEIANVVCLHQAGNLMPKAVPRHCQLAGKMNPGIQWDEVRAQQPVDGPPVRIAYMLVVHGRAIRQLKRLLKAVYHEQHFFYIHVDKRSNYLHREVVELARQYDNVRVTPWRMVTIWGGASLLRMYLRSMQDLLEVPGWAWDFFINLSATDYPTRTNEELVAFLSKNRDKNFLKSHGRDNSRFIKKQGLDRLFHECDSHMWRLGERQIPAGIVVDGGSDWFVLTRSFVEYVVYTDDPLVAQLRQFYTYTLLPAESFFHTVLENSPACESLVDNNLRVTNWNRRLGCKCQYKHIVDWCGCSPNDFKPQDFLRLQQVSRPTFFARKFESTVNQEVLEILDFHLYGSYPPGTPALKAYWENTYDAADGPGGLSDVMLTAYTAFARLSLRHAATAIPPLATPLCRFEPRGLPSSVHLYFYDDHFQGYLVTQAVQPSAQGPAETLEMWLMPQGSLKLLGRSDQASRLQSLEVGTEWDPKERLFRNFGGLLGPLDEPVAMQRWARGPNLTATVVWIDPTYVVATSYDIAVDADTEVTQYKPPLSRPLRPGAWTVRLLQFWEPLGETRFLVLPLTFNRKLPLRKDDASWLHAGPPHNEYMEQSFQGLSGILNLPQPEPAEEAARRHAELTGPALEAWTDGELSGFWSVAGLCAMGPSACPSLELCRLTSWSSVFPDPKSELGPVKADGRLR.

The Cytoplasmic portion of the chain corresponds to 1–15 (MVASARVQKLVRRYK). Residues 16–36 (LAIATALAILLLQGLVVWSFS) traverse the membrane as a helical; Signal-anchor for type II membrane protein segment. The Lumenal portion of the chain corresponds to 37 to 865 (GLEEDEPGEK…GPVKADGRLR (829 aa)). The tract at residues 39-157 (EEDEPGEKGR…EGAPQPTDNG (119 aa)) is disordered. Positions 53-65 (RPLDPGEGSKDTD) are enriched in basic and acidic residues. Basic residues predominate over residues 73 to 82 (SAGRRHGRWR). Asn-122 carries N-linked (GlcNAc...) asparagine glycosylation. Residues 125 to 137 (GAAAGEALVGAAG) show a composition bias toward low complexity. Disulfide bonds link Cys-162–Cys-190, Cys-206–Cys-448, Cys-467–Cys-480, and Cys-469–Cys-478. Residues Val-239, Asp-267, and 296–298 (TIW) contribute to the UDP-alpha-D-xylose site. Asn-327 carries N-linked (GlcNAc...) asparagine glycosylation. Position 400 to 401 (400 to 401 (DW)) interacts with UDP-alpha-D-xylose. Residues Ser-481 and 504 to 505 (RK) contribute to the UDP-alpha-D-xylose site. 2 cysteine pairs are disulfide-bonded: Cys-581/Cys-833 and Cys-826/Cys-839. Asn-683 is a glycosylation site (N-linked (GlcNAc...) asparagine).

The protein belongs to the glycosyltransferase 14 family. XylT subfamily. Monomer. The cofactor is Mg(2+). Mn(2+) serves as cofactor. Post-translationally, contains disulfide bonds.

Its subcellular location is the golgi apparatus membrane. The protein resides in the secreted. The enzyme catalyses UDP-alpha-D-xylose + L-seryl-[protein] = 3-O-(beta-D-xylosyl)-L-seryl-[protein] + UDP + H(+). The protein operates within glycan metabolism; chondroitin sulfate biosynthesis. It participates in glycan metabolism; heparan sulfate biosynthesis. Its function is as follows. Catalyzes the first step in the biosynthesis of chondroitin sulfate, heparan sulfate and dermatan sulfate proteoglycans, such as DCN. Transfers D-xylose from UDP-D-xylose to specific serine residues of the core protein. The protein is Xylosyltransferase 2 (XYLT2) of Canis lupus familiaris (Dog).